The sequence spans 951 residues: MPGPLRLLCFFALGLLGSAGPSGAAPPLCAAPCSCDGDRRVDCSGKGLTAVPEGLSAFTQALDISMNNITQLPEDAFKSFPFLEELQLAGNDLSFIHPKALSGLKELKVLTLQNNQLRTVPSEAIHGLSALQSLRLDANHITSVPEDSFEGLVQLRHLWLDDNSLTEVPVRPLSNLPTLQALTLALNNISSIPDFAFTNLSSLVVLHLHNNKIKSLSQHCFDGLDNLETLDLNYNNLDEFPQAIKALPSLKELGFHSNSISVIPDGAFGGNPLLRTIHLYDNPLSFVGNSAFHNLSDLHSLVIRGASLVQWFPNLTGTVHLESLTLTGTKISSIPDDLCQNQKMLRTLDLSYNNIRDLPSFNGCRALEEISLQRNQISLIKENTFQGLTSLRILDLSRNLIREIHSGAFAKLGTITNLDVSFNELTSFPTEGLNGLNQLKLVGNFKLKDALAARDFANLRSLSVPYAYQCCAFWGCDSYANLNTEDNSPQEHSVTKEKGATDAANVTSTAENEEHSQIIIHCTPSTGAFKPCEYLLGSWMIRLTVWFIFLVALLFNLLVILTVFASCSSLPASKLFIGLISVSNLLMGIYTGILTFLDAVSWGRFAEFGIWWETGSGCKVAGSLAVFSSESAVFLLTLAAVERSVFAKDLMKHGKSSHLRQFQVAALLALLGAAVAGCFPLFHGGQYSASPLCLPFPTGETPSLGFTVTLVLLNSLAFLLMAIIYTKLYCNLEKEDLSENSQSSVIKHVAWLIFTNCIFFCPVAFFSFAPLITAISISPEIMKSVTLIFFPLPACLNPVLYVFFNPKFKEDWKLLKRRVTRKHGSVSVSISSQGGCGEQDFYYDCGMYSHLQGNLTVCDCCESFLLTKPVSCKHLIKSHSCPVLTAASCQRPEAYWSDCGTQSAHSDYADEEDSFVSDSSDQVQACGRACFYQSRGFPLVRYAYNLQRVRD.

Residues 1–24 (MPGPLRLLCFFALGLLGSAGPSGA) form the signal peptide. An LRRNT domain is found at 25-57 (APPLCAAPCSCDGDRRVDCSGKGLTAVPEGLSA). The Extracellular segment spans residues 25-544 (APPLCAAPCS…LLGSWMIRLT (520 aa)). 2 cysteine pairs are disulfide-bonded: Cys-29/Cys-35 and Cys-33/Cys-43. 10 LRR repeats span residues 58 to 79 (FTQA…AFKS), 82 to 103 (FLEE…ALSG), 106 to 127 (ELKV…AIHG), 130 to 151 (ALQS…SFEG), 154 to 177 (QLRH…SNLP), 178 to 199 (TLQA…AFTN), 202 to 223 (SLVV…CFDG), 226 to 247 (NLET…IKAL), 249 to 270 (SLKE…AFGG), and 273 to 294 (LLRT…AFHN). Asn-68 carries an N-linked (GlcNAc...) asparagine glycan. N-linked (GlcNAc...) asparagine glycosylation is found at Asn-188 and Asn-199. 2 N-linked (GlcNAc...) asparagine glycosylation sites follow: Asn-294 and Asn-314. LRR repeat units follow at residues 320 to 341 (HLES…LCQN), 344 to 365 (MLRT…NGCR), 366 to 387 (ALEE…TFQG), 390 to 411 (SLRI…AFAK), and 414 to 435 (TITN…GLNG). Cys-339 and Cys-364 form a disulfide bridge. Intrachain disulfides connect Cys-470–Cys-522 and Cys-471–Cys-476. An N-linked (GlcNAc...) asparagine glycan is attached at Asn-505. The helical transmembrane segment at 545 to 565 (VWFIFLVALLFNLLVILTVFA) threads the bilayer. Residues 566–575 (SCSSLPASKL) are Cytoplasmic-facing. Residues 576-596 (FIGLISVSNLLMGIYTGILTF) form a helical membrane-spanning segment. At 597-619 (LDAVSWGRFAEFGIWWETGSGCK) the chain is on the extracellular side. Cys-618 and Cys-693 are disulfide-bonded. The helical transmembrane segment at 620–640 (VAGSLAVFSSESAVFLLTLAA) threads the bilayer. The Cytoplasmic segment spans residues 641 to 661 (VERSVFAKDLMKHGKSSHLRQ). The chain crosses the membrane as a helical span at residues 662–682 (FQVAALLALLGAAVAGCFPLF). The Extracellular portion of the chain corresponds to 683–703 (HGGQYSASPLCLPFPTGETPS). Residues 704 to 724 (LGFTVTLVLLNSLAFLLMAII) form a helical membrane-spanning segment. At 725–756 (YTKLYCNLEKEDLSENSQSSVIKHVAWLIFTN) the chain is on the cytoplasmic side. Residues 757 to 777 (CIFFCPVAFFSFAPLITAISI) traverse the membrane as a helical segment. Residues 778-783 (SPEIMK) are Extracellular-facing. A helical transmembrane segment spans residues 784-804 (SVTLIFFPLPACLNPVLYVFF). Residues 805–951 (NPKFKEDWKL…YAYNLQRVRD (147 aa)) are Cytoplasmic-facing. Ser-920 carries the phosphoserine modification.

This sequence belongs to the G-protein coupled receptor 1 family.

It is found in the cell membrane. Its function is as follows. Receptor for R-spondins that potentiates the canonical Wnt signaling pathway and is involved in the formation of various organs. Upon binding to R-spondins (RSPO1, RSPO2, RSPO3 or RSPO4), associates with phosphorylated LRP6 and frizzled receptors that are activated by extracellular Wnt receptors, triggering the canonical Wnt signaling pathway to increase expression of target genes. In contrast to classical G-protein coupled receptors, does not activate heterotrimeric G-proteins to transduce the signal. Its function as activator of the Wnt signaling pathway is required for the development of various organs, including liver, kidney, intestine, bone, reproductive tract and eye. May also act as a receptor for norrin (NDP), such results however require additional confirmation in vivo. Required during spermatogenesis to activate the Wnt signaling pathway in peritubular myoid cells. Required for the maintenance of intestinal stem cells and Paneth cell differentiation in postnatal intestinal crypts. Acts as a regulator of bone formation and remodeling. Involved in kidney development; required for maintaining the ureteric bud in an undifferentiated state. Involved in the development of the anterior segment of the eye. Required during erythropoiesis. Also acts as a negative regulator of innate immunity by inhibiting TLR2/TLR4 associated pattern-recognition and pro-inflammatory cytokine production. Plays an important role in regulating the circadian rhythms of plasma lipids, partially through regulating the rhythmic expression of MTTP. Required for proper development of GnRH neurons (gonadotropin-releasing hormone expressing neurons) that control the release of reproductive hormones from the pituitary gland. The polypeptide is Leucine-rich repeat-containing G-protein coupled receptor 4 (Lgr4) (Rattus norvegicus (Rat)).